We begin with the raw amino-acid sequence, 93 residues long: Large ribosomal subunit protein uL23 (93 aa).

It belongs to the universal ribosomal protein uL23 family. In terms of assembly, part of the 50S ribosomal subunit. Contacts protein L29, and trigger factor when it is bound to the ribosome.

One of the early assembly proteins it binds 23S rRNA. One of the proteins that surrounds the polypeptide exit tunnel on the outside of the ribosome. Forms the main docking site for trigger factor binding to the ribosome. The chain is Large ribosomal subunit protein uL23 from Aliarcobacter butzleri (strain RM4018) (Arcobacter butzleri).